Reading from the N-terminus, the 117-residue chain is UPF0375 protein Y45F10C.2 (117 aa).

The signal sequence occupies residues 1–20; it reads MNSFVSTVLLLSVTIALVSG.

The protein belongs to the UPF0375 family. Expressed in the uterine epithelium.

Its subcellular location is the secreted. Its function is as follows. Negatively regulates the egg-laying rate by promoting retention of fertilized eggs. This Caenorhabditis elegans protein is UPF0375 protein Y45F10C.2.